The following is a 198-amino-acid chain: Ribonuclease HII (198 aa).

The RNase H type-2 domain maps to 10–198 (QLVAGVDEVG…PVKRALGLAS (189 aa)). A divalent metal cation-binding residues include D16, E17, and D108.

It belongs to the RNase HII family. The cofactor is Mn(2+). It depends on Mg(2+) as a cofactor.

It is found in the cytoplasm. It catalyses the reaction Endonucleolytic cleavage to 5'-phosphomonoester.. Endonuclease that specifically degrades the RNA of RNA-DNA hybrids. The sequence is that of Ribonuclease HII from Shigella sonnei (strain Ss046).